A 395-amino-acid chain; its full sequence is ATP synthase subunit beta, chloroplastic (395 aa).

72–79 (GGAGVGKT) is an ATP binding site.

This sequence belongs to the ATPase alpha/beta chains family. F-type ATPases have 2 components, CF(1) - the catalytic core - and CF(0) - the membrane proton channel. CF(1) has five subunits: alpha(3), beta(3), gamma(1), delta(1), epsilon(1). CF(0) has four main subunits: a(1), b(1), b'(1) and c(9-12).

It localises to the plastid. The protein localises to the chloroplast thylakoid membrane. It carries out the reaction ATP + H2O + 4 H(+)(in) = ADP + phosphate + 5 H(+)(out). In terms of biological role, produces ATP from ADP in the presence of a proton gradient across the membrane. The catalytic sites are hosted primarily by the beta subunits. This chain is ATP synthase subunit beta, chloroplastic, found in Blechnum occidentale (Hammock fern).